The sequence spans 320 residues: Malate dehydrogenase (320 aa).

NAD(+) contacts are provided by residues 10-15 (GSGMIG) and Asp34. Substrate is bound by residues Arg83 and Arg89. NAD(+) is bound by residues Asn96 and 119 to 121 (ITN). Residues Asn121 and Arg152 each contribute to the substrate site. The active-site Proton acceptor is His176.

The protein belongs to the LDH/MDH superfamily. MDH type 3 family.

It catalyses the reaction (S)-malate + NAD(+) = oxaloacetate + NADH + H(+). In terms of biological role, catalyzes the reversible oxidation of malate to oxaloacetate. In Rhizobium meliloti (strain 1021) (Ensifer meliloti), this protein is Malate dehydrogenase.